The sequence spans 190 residues: CASP-like protein 1E1 (190 aa).

Positions 1–23 (MEHESKNKVDGMEMEKGKKESGS) are disordered. The Cytoplasmic segment spans residues 1-28 (MEHESKNKVDGMEMEKGKKESGSRKGLE). The chain crosses the membrane as a helical span at residues 29-49 (LTMRVLALVLTMVAATVLGVA). Residues 50–83 (KQTKVVPIKLIPTLPPLNVSTTAKASYLSAFVYN) are Extracellular-facing. N-linked (GlcNAc...) asparagine glycosylation is present at Asn-67. Residues 84–104 (ISANAIACGYTAISIVIVMIS) form a helical membrane-spanning segment. The Cytoplasmic portion of the chain corresponds to 105-111 (KGKRSKS). The chain crosses the membrane as a helical span at residues 112 to 132 (LLMAVLIGDLMMVALLFSSTG). At 133–163 (AAGAIGLMGRHGNKHVMWKKVCGVFGKFCNQ) the chain is on the extracellular side. The helical transmembrane segment at 164 to 184 (AAVSVAITLIASVVFMLLVVL) threads the bilayer. Over 185–190 (DALKLP) the chain is Cytoplasmic.

It belongs to the Casparian strip membrane proteins (CASP) family. Homodimer and heterodimers.

It localises to the cell membrane. This Arabidopsis thaliana (Mouse-ear cress) protein is CASP-like protein 1E1.